The following is a 183-amino-acid chain: ATP synthase subunit delta (183 aa).

This sequence belongs to the ATPase delta chain family. F-type ATPases have 2 components, F(1) - the catalytic core - and F(0) - the membrane proton channel. F(1) has five subunits: alpha(3), beta(3), gamma(1), delta(1), epsilon(1). F(0) has three main subunits: a(1), b(2) and c(10-14). The alpha and beta chains form an alternating ring which encloses part of the gamma chain. F(1) is attached to F(0) by a central stalk formed by the gamma and epsilon chains, while a peripheral stalk is formed by the delta and b chains.

Its subcellular location is the cell inner membrane. In terms of biological role, f(1)F(0) ATP synthase produces ATP from ADP in the presence of a proton or sodium gradient. F-type ATPases consist of two structural domains, F(1) containing the extramembraneous catalytic core and F(0) containing the membrane proton channel, linked together by a central stalk and a peripheral stalk. During catalysis, ATP synthesis in the catalytic domain of F(1) is coupled via a rotary mechanism of the central stalk subunits to proton translocation. This protein is part of the stalk that links CF(0) to CF(1). It either transmits conformational changes from CF(0) to CF(1) or is implicated in proton conduction. The protein is ATP synthase subunit delta of Thermotoga maritima (strain ATCC 43589 / DSM 3109 / JCM 10099 / NBRC 100826 / MSB8).